The chain runs to 462 residues: Aquaporin-1 (462 aa).

Residues 1 to 11 (MTMRSPLTNDH) show a composition bias toward polar residues. The interval 1 to 24 (MTMRSPLTNDHPQPLRASPLSEHD) is disordered. Residues 1–146 (MTMRSPLTND…KWMNSDWKNH (146 aa)) are Cytoplasmic-facing. A helical transmembrane segment spans residues 147-167 (IVAVIGELIGTSLFLFFGYAG). The Extracellular segment spans residues 168-182 (IEVAKLQGREPPDLE). The chain crosses the membrane as a helical span at residues 183 to 203 (VLFYISATFGASLMVTAWIFF). The Cytoplasmic portion of the chain corresponds to 204-229 (RISGGLFNPAVTLALAILKAVSPIRA). The NPA 1 motif lies at 211–213 (NPA). A helical membrane pass occupies residues 230 to 250 (FLLVITQLGASCLAAILVQEI). The Extracellular segment spans residues 251-269 (FPKQLDVATTLGSGTSMGQ). Residues 270–290 (GFVIEAITTAALIFTIIMLAV) form a helical membrane-spanning segment. Residues 291–296 (EKHKAT) are Cytoplasmic-facing. Residues 297–317 (FVAPIGIGLALFVAHMVAVPF) traverse the membrane as a helical segment. Over 318–341 (TGASLNPARSFGPSAIVWNFPREH) the chain is Extracellular. Residues 323-325 (NPA) carry the NPA 2 motif. A helical membrane pass occupies residues 342–362 (WIYWVGPILGAGLAVLFFRLI). Over 363–462 (KLMEYEMANP…WRRQQYRNVV (100 aa)) the chain is Cytoplasmic. Residues 407 to 433 (GKSWYRDDSSSGSMRRKESVNSFTGGR) form a disordered region. Residues 410 to 425 (WYRDDSSSGSMRRKES) are compositionally biased toward basic and acidic residues.

It belongs to the MIP/aquaporin (TC 1.A.8) family.

The protein localises to the membrane. The catalysed reaction is H2O(in) = H2O(out). Functionally, water channel required to facilitate the transport of water across membranes. Involved in conidiation. In Botryotinia fuckeliana (strain B05.10) (Noble rot fungus), this protein is Aquaporin-1.